Consider the following 325-residue polypeptide: Tagatose 1,6-diphosphate aldolase 1 (325 aa).

The protein belongs to the aldolase LacD family.

The enzyme catalyses D-tagatofuranose 1,6-bisphosphate = D-glyceraldehyde 3-phosphate + dihydroxyacetone phosphate. Its pathway is carbohydrate metabolism; D-tagatose 6-phosphate degradation; D-glyceraldehyde 3-phosphate and glycerone phosphate from D-tagatose 6-phosphate: step 2/2. In Streptococcus pyogenes serotype M1, this protein is Tagatose 1,6-diphosphate aldolase 1 (lacD1).